Consider the following 412-residue polypeptide: Serine hydroxymethyltransferase (412 aa).

Residues Leu-112 and 116 to 118 each bind (6S)-5,6,7,8-tetrahydrofolate; that span reads GHL. Position 221 is an N6-(pyridoxal phosphate)lysine (Lys-221). (6S)-5,6,7,8-tetrahydrofolate is bound at residue Glu-237.

Belongs to the SHMT family. Homodimer. Pyridoxal 5'-phosphate serves as cofactor.

The protein localises to the cytoplasm. The catalysed reaction is (6R)-5,10-methylene-5,6,7,8-tetrahydrofolate + glycine + H2O = (6S)-5,6,7,8-tetrahydrofolate + L-serine. Its pathway is one-carbon metabolism; tetrahydrofolate interconversion. It functions in the pathway amino-acid biosynthesis; glycine biosynthesis; glycine from L-serine: step 1/1. Its function is as follows. Catalyzes the reversible interconversion of serine and glycine with tetrahydrofolate (THF) serving as the one-carbon carrier. This reaction serves as the major source of one-carbon groups required for the biosynthesis of purines, thymidylate, methionine, and other important biomolecules. Also exhibits THF-independent aldolase activity toward beta-hydroxyamino acids, producing glycine and aldehydes, via a retro-aldol mechanism. In Malacoplasma penetrans (strain HF-2) (Mycoplasma penetrans), this protein is Serine hydroxymethyltransferase.